We begin with the raw amino-acid sequence, 304 residues long: UDP-3-O-acyl-N-acetylglucosamine deacetylase (304 aa).

Residues His78, His237, and Asp241 each contribute to the Zn(2+) site. His264 serves as the catalytic Proton donor.

Belongs to the LpxC family. It depends on Zn(2+) as a cofactor.

It catalyses the reaction a UDP-3-O-[(3R)-3-hydroxyacyl]-N-acetyl-alpha-D-glucosamine + H2O = a UDP-3-O-[(3R)-3-hydroxyacyl]-alpha-D-glucosamine + acetate. The protein operates within glycolipid biosynthesis; lipid IV(A) biosynthesis; lipid IV(A) from (3R)-3-hydroxytetradecanoyl-[acyl-carrier-protein] and UDP-N-acetyl-alpha-D-glucosamine: step 2/6. Functionally, catalyzes the hydrolysis of UDP-3-O-myristoyl-N-acetylglucosamine to form UDP-3-O-myristoylglucosamine and acetate, the committed step in lipid A biosynthesis. The protein is UDP-3-O-acyl-N-acetylglucosamine deacetylase of Xylella fastidiosa (strain 9a5c).